The sequence spans 519 residues: Ribose import ATP-binding protein RbsA 2 (519 aa).

2 ABC transporter domains span residues F15–P252 and H262–R506. G47–S54 contributes to the ATP binding site.

The protein belongs to the ABC transporter superfamily. Ribose importer (TC 3.A.1.2.1) family. In terms of assembly, the complex is composed of an ATP-binding protein (RbsA), two transmembrane proteins (RbsC) and a solute-binding protein (RbsB).

Its subcellular location is the cell membrane. It carries out the reaction D-ribose(out) + ATP + H2O = D-ribose(in) + ADP + phosphate + H(+). Functionally, part of the ABC transporter complex RbsABC involved in ribose import. Responsible for energy coupling to the transport system. This is Ribose import ATP-binding protein RbsA 2 from Rubrobacter xylanophilus (strain DSM 9941 / JCM 11954 / NBRC 16129 / PRD-1).